A 107-amino-acid polypeptide reads, in one-letter code: uncharacterized protein (107 aa).

This is an uncharacterized protein from Acidianus convivator (ABV).